Reading from the N-terminus, the 158-residue chain is Probable cyclic pyranopterin monophosphate synthase (158 aa).

Substrate is bound by residues 78–80 and 114–115; these read MCH and ME. The active site involves D129.

The protein belongs to the MoaC family. In terms of assembly, homohexamer; trimer of dimers.

The catalysed reaction is (8S)-3',8-cyclo-7,8-dihydroguanosine 5'-triphosphate = cyclic pyranopterin phosphate + diphosphate. Its pathway is cofactor biosynthesis; molybdopterin biosynthesis. Catalyzes the conversion of (8S)-3',8-cyclo-7,8-dihydroguanosine 5'-triphosphate to cyclic pyranopterin monophosphate (cPMP). The chain is Probable cyclic pyranopterin monophosphate synthase from Methanosarcina acetivorans (strain ATCC 35395 / DSM 2834 / JCM 12185 / C2A).